The sequence spans 645 residues: Acetyl-coenzyme A synthetase (645 aa).

CoA-binding positions include 190-193 (RGGR) and Thr308. Residues 384 to 386 (GEP), 408 to 413 (DTWWQT), Asp497, and Arg512 contribute to the ATP site. Residue Ser520 participates in CoA binding. Arg523 serves as a coordination point for ATP. Residues Val534, His536, and Val539 each coordinate Mg(2+). Lys606 is subject to N6-acetyllysine.

Belongs to the ATP-dependent AMP-binding enzyme family. Mg(2+) is required as a cofactor. Acetylated. Deacetylation by the SIR2-homolog deacetylase activates the enzyme.

It carries out the reaction acetate + ATP + CoA = acetyl-CoA + AMP + diphosphate. Its function is as follows. Catalyzes the conversion of acetate into acetyl-CoA (AcCoA), an essential intermediate at the junction of anabolic and catabolic pathways. AcsA undergoes a two-step reaction. In the first half reaction, AcsA combines acetate with ATP to form acetyl-adenylate (AcAMP) intermediate. In the second half reaction, it can then transfer the acetyl group from AcAMP to the sulfhydryl group of CoA, forming the product AcCoA. This Halorhodospira halophila (strain DSM 244 / SL1) (Ectothiorhodospira halophila (strain DSM 244 / SL1)) protein is Acetyl-coenzyme A synthetase.